We begin with the raw amino-acid sequence, 654 residues long: Transcription factor E2-alpha (654 aa).

The short motif at 19–27 (LLDFSMMFP) is the 9aaTAD element. Residues 31-103 (TNGKGRPASL…LGPGLGGKSG (73 aa)) are disordered. Residues 55 to 68 (SSGSWGSGDQSSSS) are compositionally biased toward low complexity. The span at 69–79 (FDPSRTFSEGT) shows a compositional bias: polar residues. The span at 84–94 (SHSSLSSSTFL) shows a compositional bias: low complexity. Serine 134 and serine 139 each carry phosphoserine. 4 disordered regions span residues 135 to 205 (PGPL…SAKT), 239 to 268 (MLGG…FGGL), 292 to 329 (SFSS…GSSG), and 343 to 385 (DHSS…YDGG). Positions 147-156 (SQYYPSYSGS) are enriched in low complexity. The Nuclear localization signal motif lies at 170 to 176 (PKKVRKV). Over residues 256–268 (VGSSGSSSTFGGL) the composition is skewed to low complexity. A compositionally biased stretch (low complexity) spans 343–354 (DHSSNNFSSSPS). Threonine 355 is subject to Phosphothreonine. Serine 359 carries the post-translational modification Phosphoserine. Position 371 is an omega-N-methylarginine (arginine 371). Serine 379 is modified (phosphoserine). Residues 389–425 (LQSKIEDHLDEAIHVLRSHAVGTAGDMHTLLPGHGAL) are leucine-zipper. Positions 461-552 (NHAALPSQPG…KAEREKERRV (92 aa)) are disordered. A Glycyl lysine isopeptide (Lys-Gly) (interchain with G-Cter in SUMO2) cross-link involves residue lysine 498. Residues 512-523 (DHSEEEKKELKA) show a composition bias toward basic and acidic residues. At serine 529 the chain carries Phosphoserine. Aspartate 531 carries the post-translational modification Phosphothreonine. Residues 542-552 (QKAEREKERRV) are compositionally biased toward basic and acidic residues. The region spanning 549–602 (ERRVANNARERLRVRDINEAFKELGRMCQLHLNSEKPQTKLLILHQAVSVILNL) is the bHLH domain. Lysine 625 is covalently cross-linked (Glycyl lysine isopeptide (Lys-Gly) (interchain with G-Cter in SUMO2)). The tract at residues 633–654 (PQMVLSAPHPGLSEAHNPAGHM) is disordered.

In terms of assembly, homodimer. Heterodimer; efficient DNA binding requires dimerization with another bHLH protein. Forms a heterodimer with ASH1, TWIST1 and TWIST2. Forms a heterodimer with MYOG; heterodimerization enhances MYOG DNA-binding and transcriptional activities. Forms a heterodimer with NEUROD1; the heterodimer is inhibited in presence of ID2, but not NR0B2, to E-box element. Forms a heterodimer with TCF15; the heterodimer binds E-box element. Forms a heterodimer with ATOH8; repress transcription of TCF3 and TCF3/NEUROG3 dimer-induced transactivation of E box-dependent promoters. Component of a nuclear TAL-1 complex composed at least of CBFA2T3, LDB1, TAL1 and TCF3. Interacts with NEUROD2, PTF1A and TGFB1I1. Interacts with EP300 and UBE2I. Interacts with BHLHA9. Interacts with ASB2; the interaction is mediated by SKP2 and targets TCF3 for Notch-induced proteasomal degradation. Forms a heterodimer with ATOH7; required for ATOH7 DNA-binding. As to quaternary structure, interacts with RALGAPA1 and FIGLA. Post-translationally, phosphorylated following NGF stimulation. In terms of processing, undergoes Notch-induced ubiquitination and subsequent proteasomal degradation which is mediated by ASB1 or ASB2, the substrate-recognition components of probable ECS E3 ubiquitin-protein ligase complexes.

It is found in the nucleus. In terms of biological role, transcriptional regulator involved in the initiation of neuronal differentiation and mesenchymal to epithelial transition. Heterodimers between TCF3 and tissue-specific basic helix-loop-helix (bHLH) proteins play major roles in determining tissue-specific cell fate during embryogenesis, like muscle or early B-cell differentiation. Together with TCF15, required for the mesenchymal to epithelial transition. Dimers bind DNA on E-box motifs: 5'-CANNTG-3'. Binds to the kappa-E2 site in the kappa immunoglobulin gene enhancer. Binds to IEB1 and IEB2, which are short DNA sequences in the insulin gene transcription control region. Functionally, facilitates ATOH7 binding to DNA at the consensus sequence 5'-CAGGTG-3', and positively regulates transcriptional activity. The polypeptide is Transcription factor E2-alpha (TCF3) (Homo sapiens (Human)).